A 485-amino-acid chain; its full sequence is ATP synthase subunit beta (485 aa).

Position 158–165 (158–165 (GGAGVGKT)) interacts with ATP.

This sequence belongs to the ATPase alpha/beta chains family. In terms of assembly, F-type ATPases have 2 components, CF(1) - the catalytic core - and CF(0) - the membrane proton channel. CF(1) has five subunits: alpha(3), beta(3), gamma(1), delta(1), epsilon(1). CF(0) has four main subunits: a(1), b(1), b'(1) and c(9-12).

It localises to the cell inner membrane. The catalysed reaction is ATP + H2O + 4 H(+)(in) = ADP + phosphate + 5 H(+)(out). In terms of biological role, produces ATP from ADP in the presence of a proton gradient across the membrane. The catalytic sites are hosted primarily by the beta subunits. The protein is ATP synthase subunit beta of Erythrobacter litoralis (strain HTCC2594).